The following is a 398-amino-acid chain: Argininosuccinate synthase (398 aa).

ATP-binding positions include 9–17 (AYSGGVDTS) and Ala-37. Tyr-88 serves as a coordination point for L-citrulline. An ATP-binding site is contributed by Gly-118. Positions 120, 124, and 125 each coordinate L-aspartate. L-citrulline is bound at residue Asn-124. Residues Arg-128, Ser-176, Ser-185, Glu-261, and Tyr-273 each contribute to the L-citrulline site.

It belongs to the argininosuccinate synthase family. Type 1 subfamily. In terms of assembly, homotetramer.

It is found in the cytoplasm. It catalyses the reaction L-citrulline + L-aspartate + ATP = 2-(N(omega)-L-arginino)succinate + AMP + diphosphate + H(+). The protein operates within amino-acid biosynthesis; L-arginine biosynthesis; L-arginine from L-ornithine and carbamoyl phosphate: step 2/3. The chain is Argininosuccinate synthase from Gloeobacter violaceus (strain ATCC 29082 / PCC 7421).